The primary structure comprises 358 residues: 3-dehydroquinate synthase (358 aa).

Residues 70–75, 104–108, 128–129, lysine 141, lysine 150, and 168–171 contribute to the NAD(+) site; these read DGEQYK, GVIGD, TT, and CLST. Zn(2+) is bound by residues glutamate 183, histidine 246, and histidine 263.

This sequence belongs to the sugar phosphate cyclases superfamily. Dehydroquinate synthase family. Co(2+) serves as cofactor. Requires Zn(2+) as cofactor. The cofactor is NAD(+).

The protein resides in the cytoplasm. It carries out the reaction 7-phospho-2-dehydro-3-deoxy-D-arabino-heptonate = 3-dehydroquinate + phosphate. It participates in metabolic intermediate biosynthesis; chorismate biosynthesis; chorismate from D-erythrose 4-phosphate and phosphoenolpyruvate: step 2/7. Functionally, catalyzes the conversion of 3-deoxy-D-arabino-heptulosonate 7-phosphate (DAHP) to dehydroquinate (DHQ). In Shewanella woodyi (strain ATCC 51908 / MS32), this protein is 3-dehydroquinate synthase.